A 239-amino-acid polypeptide reads, in one-letter code: Aspartate/glutamate leucyltransferase (239 aa).

The protein belongs to the R-transferase family. Bpt subfamily.

The protein resides in the cytoplasm. The enzyme catalyses N-terminal L-glutamyl-[protein] + L-leucyl-tRNA(Leu) = N-terminal L-leucyl-L-glutamyl-[protein] + tRNA(Leu) + H(+). It catalyses the reaction N-terminal L-aspartyl-[protein] + L-leucyl-tRNA(Leu) = N-terminal L-leucyl-L-aspartyl-[protein] + tRNA(Leu) + H(+). Functionally, functions in the N-end rule pathway of protein degradation where it conjugates Leu from its aminoacyl-tRNA to the N-termini of proteins containing an N-terminal aspartate or glutamate. The polypeptide is Aspartate/glutamate leucyltransferase (Alkalilimnicola ehrlichii (strain ATCC BAA-1101 / DSM 17681 / MLHE-1)).